We begin with the raw amino-acid sequence, 208 residues long: MKKLFSAKLFSALVLSFSLFSTAHAASPKDELNKRLSMNGGFSADFSQQVISPEGETVMEGEGTVEIARPSLFRWSTTSPDENLLVSDGKTLWYYSPFIEQVSIYWQEQATEQTPFVLLTRNRASDWDNYKISQKGDQFTLIPTAVDSTQGQFQINIDAKGVVKGFNVVEQDGQKGLFTFNNVKLGKPKADRFTFTIPNGVEVDDQRN.

Residues 1 to 25 (MKKLFSAKLFSALVLSFSLFSTAHA) form the signal peptide.

The protein belongs to the LolA family. Monomer.

The protein localises to the periplasm. Its function is as follows. Participates in the translocation of lipoproteins from the inner membrane to the outer membrane. Only forms a complex with a lipoprotein if the residue after the N-terminal Cys is not an aspartate (The Asp acts as a targeting signal to indicate that the lipoprotein should stay in the inner membrane). This chain is Outer-membrane lipoprotein carrier protein, found in Vibrio campbellii (strain ATCC BAA-1116).